The chain runs to 1339 residues: Retrotransposon Gag-like protein 9 (1339 aa).

3 stretches are compositionally biased toward polar residues: residues 533-545 (TVPT…TQKT), 679-693 (SGTK…TTSG), and 700-711 (TRLSGPGATSTP). Disordered regions lie at residues 533-555 (TVPT…PMST), 679-711 (SGTK…TSTP), 845-864 (GVMS…SRPQ), 880-901 (PATA…LSTL), 982-1010 (ATSL…GAGS), and 1078-1116 (ATDS…PPKE). Over residues 891-901 (RSPASSTLSTL) the composition is skewed to low complexity. Positions 1078 to 1106 (ATDSGEASTSHTRFTAPGSKSTPHMTSTA) are enriched in polar residues.

The polypeptide is Retrotransposon Gag-like protein 9 (Mus musculus (Mouse)).